The primary structure comprises 457 residues: Cation efflux system protein CusC (457 aa).

A signal peptide spans 1 to 17 (MSPCKLLPFCVALALTG). Residue C18 is the site of N-palmitoyl cysteine attachment. C18 is lipidated: S-diacylglycerol cysteine.

This sequence belongs to the outer membrane factor (OMF) (TC 1.B.17) family. As to quaternary structure, homotrimer. Component of the cus efflux system composed of CusA, CusB, CusC and CusF.

Its subcellular location is the cell outer membrane. Functionally, forms pores that allow passive diffusion of cations across the outer membrane. Part of a cation efflux system that mediates resistance to copper and silver. In pathogenic strains it allows the bacteria to invade brain microvascular endothelial cells (BMEC) thus allowing it to cross the blood-brain barrier and cause neonatal meningitis. The sequence is that of Cation efflux system protein CusC (cusC) from Escherichia coli (strain K12).